The chain runs to 402 residues: CD2 homolog (402 aa).

The signal sequence occupies residues 1–16; sequence MIIIVIFLMCLKIVLN. At 17–204 the chain is on the extracellular side; it reads NIIIWSTLNQ…ILKYQNYLST (188 aa). N-linked (GlcNAc...) asparagine; by host glycans are attached at residues Asn25, Asn37, Asn52, Asn55, Asn72, Asn77, Asn81, Asn89, Asn95, Asn108, Asn125, Asn137, Asn148, Asn153, Asn169, Asn177, Asn184, and Asn190. Cystine bridges form between Cys126/Cys191 and Cys133/Cys174. Residues 205-225 form a helical membrane-spanning segment; it reads LFYIIIFIVSGLIIGIFISII. Residues 226–402 lie on the Cytoplasmic side of the membrane; the sequence is SVLSIRRKRK…ISLIHVDRII (177 aa). Positions 238–276 are disordered; it reads VEEIESPPPSESNEEDISHDDTTSIHEPSPREPLLPKPY. Basic and acidic residues predominate over residues 256-267; sequence HDDTTSIHEPSP. Repeat copies occupy residues 302–307, 308–313, 314–319, 320–325, 326–331, 332–337, 338–343, 344–349, 350–355, 356–361, and 362–367. The 11 X 6 AA tandem repeats of K-P-C-[PRS]-[P]-[PS] stretch occupies residues 302 to 367; it reads KPCPPPKPCP…CPPSKPCPSP (66 aa). Pro residues predominate over residues 319–386; that stretch reads PKPCPPPKPC…PSIPLLPNIP (68 aa). The disordered stretch occupies residues 319-388; that stretch reads PKPCPPPKPC…IPLLPNIPPL (70 aa).

This sequence belongs to the asfivirus CD2 homolog protein family. As to quaternary structure, both glycosylated and nonglycosylated forms interact (via C-terminus) with the host AP-1 complex. In terms of processing, cleaved into two fragments of 63 kDa and 26 kDa containing respectively the glycosylated N-terminus and the nonglycosylated C-terminus. A full-length 89-kDa glycosylated form also exists.

The protein localises to the host cell membrane. The protein resides in the virion membrane. It is found in the host Golgi apparatus. Its function is as follows. May play an immunosuppressive role by inhibiting lymphocyte proliferation and subsequently facilitating viral replication and generalization of infection. Responsible for viral hemadsorption, which may help viral spread. Increases virus replication in the tick vector at the step of virus uptake or replication in the tick gut. May play a role in the host Golgi reorganization to yield viral factories. May play a role in host cell penetration. The protein is CD2 homolog of Ornithodoros (relapsing fever ticks).